Consider the following 151-residue polypeptide: Transcriptional regulator MraZ (151 aa).

2 consecutive SpoVT-AbrB domains span residues 5–52 (ANAV…PLDE) and 81–124 (AVDL…DEDA).

This sequence belongs to the MraZ family. As to quaternary structure, forms oligomers.

It is found in the cytoplasm. The protein localises to the nucleoid. This Pseudomonas putida (strain W619) protein is Transcriptional regulator MraZ.